A 156-amino-acid chain; its full sequence is Rhodanese-like domain-containing protein 17 (156 aa).

A Rhodanese domain is found at 44-146; that stretch reads LDSGYTFLDV…WVNKRFPVKV (103 aa). Cys106 serves as the catalytic Cysteine persulfide intermediate.

This chain is Rhodanese-like domain-containing protein 17 (STR17), found in Arabidopsis thaliana (Mouse-ear cress).